The following is a 185-amino-acid chain: Threonylcarbamoyl-AMP synthase (185 aa).

Positions 4–185 constitute a YrdC-like domain; it reads SFRAQCAARV…LVTGQVIRPA (182 aa).

The protein belongs to the SUA5 family. TsaC subfamily.

It localises to the cytoplasm. It carries out the reaction L-threonine + hydrogencarbonate + ATP = L-threonylcarbamoyladenylate + diphosphate + H2O. Required for the formation of a threonylcarbamoyl group on adenosine at position 37 (t(6)A37) in tRNAs that read codons beginning with adenine. Catalyzes the conversion of L-threonine, HCO(3)(-)/CO(2) and ATP to give threonylcarbamoyl-AMP (TC-AMP) as the acyladenylate intermediate, with the release of diphosphate. This chain is Threonylcarbamoyl-AMP synthase, found in Pseudomonas paraeruginosa (strain DSM 24068 / PA7) (Pseudomonas aeruginosa (strain PA7)).